We begin with the raw amino-acid sequence, 246 residues long: 2,3-bisphosphoglycerate-dependent phosphoglycerate mutase (246 aa).

Substrate-binding positions include 9 to 16 (RHGQSAWN), 22 to 23 (TG), R61, 88 to 91 (ERHY), K99, 115 to 116 (RR), and 181 to 182 (GN). The active-site Tele-phosphohistidine intermediate is the H10. The active-site Proton donor/acceptor is the E88.

Belongs to the phosphoglycerate mutase family. BPG-dependent PGAM subfamily.

The catalysed reaction is (2R)-2-phosphoglycerate = (2R)-3-phosphoglycerate. It functions in the pathway carbohydrate degradation; glycolysis; pyruvate from D-glyceraldehyde 3-phosphate: step 3/5. Functionally, catalyzes the interconversion of 2-phosphoglycerate and 3-phosphoglycerate. The polypeptide is 2,3-bisphosphoglycerate-dependent phosphoglycerate mutase (Bifidobacterium longum (strain DJO10A)).